Consider the following 363-residue polypeptide: GDSL esterase/lipase At3g14220 (363 aa).

Positions 1–28 are cleaved as a signal peptide; that stretch reads MAKNRNLVFFLGVLASFTLSSFPVTVSG. Ser39 (nucleophile) is an active-site residue. Catalysis depends on residues Asp318 and His321.

It belongs to the 'GDSL' lipolytic enzyme family.

It localises to the secreted. The protein is GDSL esterase/lipase At3g14220 of Arabidopsis thaliana (Mouse-ear cress).